We begin with the raw amino-acid sequence, 90 residues long: Probable Fe(2+)-trafficking protein (90 aa).

The protein belongs to the Fe(2+)-trafficking protein family.

Its function is as follows. Could be a mediator in iron transactions between iron acquisition and iron-requiring processes, such as synthesis and/or repair of Fe-S clusters in biosynthetic enzymes. This Idiomarina loihiensis (strain ATCC BAA-735 / DSM 15497 / L2-TR) protein is Probable Fe(2+)-trafficking protein.